The following is a 554-amino-acid chain: Hydroxylamine reductase (554 aa).

[2Fe-2S] cluster contacts are provided by Cys-3, Cys-6, Cys-18, and Cys-25. Positions 252, 276, 320, 408, 436, 461, 495, and 497 each coordinate hybrid [4Fe-2O-2S] cluster. Cys-408 is modified (cysteine persulfide).

This sequence belongs to the HCP family. Requires [2Fe-2S] cluster as cofactor. Hybrid [4Fe-2O-2S] cluster is required as a cofactor.

It is found in the cytoplasm. The catalysed reaction is A + NH4(+) + H2O = hydroxylamine + AH2 + H(+). In terms of biological role, catalyzes the reduction of hydroxylamine to form NH(3) and H(2)O. This chain is Hydroxylamine reductase, found in Shewanella sp. (strain MR-4).